A 164-amino-acid chain; its full sequence is Peptidyl-prolyl cis-trans isomerase A-like 4H (164 aa).

The PPIase cyclophilin-type domain maps to 7 to 163 (FFDITVDGKP…KKITIADCGQ (157 aa)). 2 N-linked (GlcNAc...) asparagine glycosylation sites follow: N71 and N108.

This sequence belongs to the cyclophilin-type PPIase family. PPIase A subfamily.

The protein resides in the cytoplasm. It catalyses the reaction [protein]-peptidylproline (omega=180) = [protein]-peptidylproline (omega=0). Functionally, PPIases accelerate the folding of proteins. It catalyzes the cis-trans isomerization of proline imidic peptide bonds in oligopeptides. The chain is Peptidyl-prolyl cis-trans isomerase A-like 4H from Homo sapiens (Human).